A 76-amino-acid polypeptide reads, in one-letter code: uncharacterized protein (76 aa).

Residues 1 to 22 (MFTKALSVVLLTCALFSGQLMA) form the signal peptide.

This is an uncharacterized protein from Escherichia coli O157:H7.